Reading from the N-terminus, the 976-residue chain is 3-hydroxy-3-methylglutaryl-coenzyme A reductase (976 aa).

The Lumenal segment spans residues M1–D36. One can recognise an SSD domain in the interval D36–I217. A helical membrane pass occupies residues I37 to S57. Residues M58–K64 lie on the Cytoplasmic side of the membrane. Residues F65 to V85 traverse the membrane as a helical segment. Topologically, residues T86–G90 are lumenal. The helical transmembrane segment at V91–F111 threads the bilayer. The Cytoplasmic portion of the chain corresponds to E112–D169. The chain crosses the membrane as a helical span at residues Y170–Q190. The Lumenal portion of the chain corresponds to Q191 to C193. A helical membrane pass occupies residues F194–I214. Residues L215–K272 lie on the Cytoplasmic side of the membrane. Residues F273–P293 traverse the membrane as a helical segment. The Lumenal portion of the chain corresponds to F294 to P401. A helical transmembrane segment spans residues V402–F422. Residues N423–E976 lie on the Cytoplasmic side of the membrane. Residue E618 is the Charge relay system of the active site. S624–K630 is a binding site for CoA. NADP(+)-binding positions include S685–F687 and D712–S720. Residue K752 is the Charge relay system of the active site. V781–K783 is a CoA binding site. D828 serves as the catalytic Charge relay system. A923–H924 is a CoA binding site. Catalysis depends on H924, which acts as the Proton donor. The tract at residues Q926 to P954 is disordered. N928 to R929 contacts NADP(+). Positions N928–S941 are enriched in polar residues. Basic and acidic residues predominate over residues H943–C953.

Belongs to the HMG-CoA reductase family.

The protein localises to the endoplasmic reticulum membrane. The catalysed reaction is (R)-mevalonate + 2 NADP(+) + CoA = (3S)-3-hydroxy-3-methylglutaryl-CoA + 2 NADPH + 2 H(+). The protein operates within metabolic intermediate biosynthesis; (R)-mevalonate biosynthesis; (R)-mevalonate from acetyl-CoA: step 3/3. In terms of biological role, HMG-CoA reductase; part of the first module of ergosterol biosynthesis pathway that includes the early steps of the pathway, conserved across all eukaryotes, and which results in the formation of mevalonate from acetyl-coenzyme A (acetyl-CoA). In this module, the cytosolic acetyl-CoA acetyltransferase catalyzes the formation of acetoacetyl-CoA. The hydroxymethylglutaryl-CoA synthase then condenses acetyl-CoA with acetoacetyl-CoA to form HMG-CoA. The rate-limiting step of the early module is the reduction to mevalonate by the 3-hydroxy-3-methylglutaryl-coenzyme A (HMG-CoA) reductase HMGR. This is 3-hydroxy-3-methylglutaryl-coenzyme A reductase from Fusarium fujikuroi (Bakanae and foot rot disease fungus).